A 156-amino-acid chain; its full sequence is Small ribosomal subunit protein uS7 (156 aa).

The protein belongs to the universal ribosomal protein uS7 family. Part of the 30S ribosomal subunit. Contacts proteins S9 and S11.

Functionally, one of the primary rRNA binding proteins, it binds directly to 16S rRNA where it nucleates assembly of the head domain of the 30S subunit. Is located at the subunit interface close to the decoding center, probably blocks exit of the E-site tRNA. The polypeptide is Small ribosomal subunit protein uS7 (Aliivibrio fischeri (strain MJ11) (Vibrio fischeri)).